A 685-amino-acid polypeptide reads, in one-letter code: ATP-dependent RNA helicase MSS116, mitochondrial (685 aa).

The transit peptide at 1-34 (MLVLQRIPKRALQFNGVTGTVCSTRLFHHAFNLN) directs the protein to the mitochondrion. Positions 42-107 (SEERRYRNSN…NNGSRRRYQD (66 aa)) are disordered. Low complexity predominate over residues 58–69 (SDSNSNNKYRNS). Over residues 70 to 86 (SYDDNRSRSNYGGDKRN) the composition is skewed to basic and acidic residues. The span at 88-99 (RNNNNYGNNRNN) shows a compositional bias: low complexity. Positions 138-166 (SLLEESLLDANVHKAISAMKFESLTPVQQ) match the Q motif motif. The Helicase ATP-binding domain maps to 170-357 (KPILTTENDV…ATIMNKKDCL (188 aa)). Residue 183–190 (AKTGTGKT) coordinates ATP. Positions 298-301 (DEAD) match the DEAD box motif. The Helicase C-terminal domain occupies 386-542 (SMVALIQSIE…EDYLNQDKEN (157 aa)). Residues 633 to 685 (DREFDDEDRYTSRSQNNYKSKQSSKSNRFEGRNDYSNSRRSHANQKRNFTFDD) form a disordered region. Low complexity predominate over residues 644-658 (SRSQNNYKSKQSSKS).

This sequence belongs to the DEAD box helicase family. DDX18/HAS1 subfamily.

The protein resides in the mitochondrion matrix. It carries out the reaction ATP + H2O = ADP + phosphate + H(+). ATP-dependent RNA helicase required for mitochondrial splicing of group I and II introns. Also required for efficient mitochondrial translation. This chain is ATP-dependent RNA helicase MSS116, mitochondrial (MSS116), found in Kluyveromyces lactis (strain ATCC 8585 / CBS 2359 / DSM 70799 / NBRC 1267 / NRRL Y-1140 / WM37) (Yeast).